We begin with the raw amino-acid sequence, 252 residues long: 2-succinyl-6-hydroxy-2,4-cyclohexadiene-1-carboxylate synthase (252 aa).

This sequence belongs to the AB hydrolase superfamily. MenH family. As to quaternary structure, monomer.

It carries out the reaction 5-enolpyruvoyl-6-hydroxy-2-succinyl-cyclohex-3-ene-1-carboxylate = (1R,6R)-6-hydroxy-2-succinyl-cyclohexa-2,4-diene-1-carboxylate + pyruvate. It functions in the pathway quinol/quinone metabolism; 1,4-dihydroxy-2-naphthoate biosynthesis; 1,4-dihydroxy-2-naphthoate from chorismate: step 3/7. It participates in quinol/quinone metabolism; menaquinone biosynthesis. Its function is as follows. Catalyzes a proton abstraction reaction that results in 2,5-elimination of pyruvate from 2-succinyl-5-enolpyruvyl-6-hydroxy-3-cyclohexene-1-carboxylate (SEPHCHC) and the formation of 2-succinyl-6-hydroxy-2,4-cyclohexadiene-1-carboxylate (SHCHC). The polypeptide is 2-succinyl-6-hydroxy-2,4-cyclohexadiene-1-carboxylate synthase (Escherichia coli (strain UTI89 / UPEC)).